Consider the following 174-residue polypeptide: Shikimate kinase (174 aa).

Residue 15-20 participates in ATP binding; it reads GTGKST. A Mg(2+)-binding site is contributed by serine 19. Positions 37, 61, and 82 each coordinate substrate. Arginine 120 is an ATP binding site. Position 138 (arginine 138) interacts with substrate.

The protein belongs to the shikimate kinase family. In terms of assembly, monomer. Mg(2+) serves as cofactor.

It is found in the cytoplasm. The enzyme catalyses shikimate + ATP = 3-phosphoshikimate + ADP + H(+). Its pathway is metabolic intermediate biosynthesis; chorismate biosynthesis; chorismate from D-erythrose 4-phosphate and phosphoenolpyruvate: step 5/7. Catalyzes the specific phosphorylation of the 3-hydroxyl group of shikimic acid using ATP as a cosubstrate. The protein is Shikimate kinase of Staphylococcus aureus (strain NCTC 8325 / PS 47).